We begin with the raw amino-acid sequence, 337 residues long: MNTEATHDQNEALTTGARLRNAREQLGLSQQAVAERLCLKVSTVRDIEEDKAPADLASTFLRGYIRSYARLVHIPEEELLPGLEKQAPLRAAKVAPMQSFSLGKRRKKRDGWLMTFTWLVLFVVIGLSGAWWWQDHKAQQEEITTMADQSSAELSSNSEQGQSVPLNTSTTTDPATTSTPPASVDTTATNTQTPAVTAPAPAVDPQQNAVVSPSQANVDTAATPAPTATITPDGAAPLPTDQAGVTTPAADPNALVMNFTADCWLEVTDATGKKLFSGMQRKDGNLNLTGQAPYKLKIGAPAAVQIQYQGKPVDLSRFIRTNQVARLTLNAEQSPAQ.

The Cytoplasmic segment spans residues 1 to 111; it reads MNTEATHDQN…LGKRRKKRDG (111 aa). Residues 19-71 enclose the HTH cro/C1-type domain; the sequence is LRNAREQLGLSQQAVAERLCLKVSTVRDIEEDKAPADLASTFLRGYIRSYARL. Positions 30–49 form a DNA-binding region, H-T-H motif; sequence QQAVAERLCLKVSTVRDIEE. A helical; Signal-anchor for type II membrane protein membrane pass occupies residues 112 to 132; the sequence is WLMTFTWLVLFVVIGLSGAWW. Residues 133–337 are Periplasmic-facing; the sequence is WQDHKAQQEE…TLNAEQSPAQ (205 aa). Over residues 145–167 the composition is skewed to polar residues; that stretch reads TMADQSSAELSSNSEQGQSVPLN. The interval 145-220 is disordered; it reads TMADQSSAEL…VSPSQANVDT (76 aa). Positions 168–207 are enriched in low complexity; it reads TSTTTDPATTSTPPASVDTTATNTQTPAVTAPAPAVDPQQ. The span at 208-218 shows a compositional bias: polar residues; that stretch reads NAVVSPSQANV.

Belongs to the RodZ family.

Its subcellular location is the cell inner membrane. Cytoskeletal protein that is involved in cell-shape control through regulation of the length of the long axis. This chain is Cytoskeleton protein RodZ, found in Escherichia coli O17:K52:H18 (strain UMN026 / ExPEC).